Here is a 338-residue protein sequence, read N- to C-terminus: Ornithine carbamoyltransferase (338 aa).

Carbamoyl phosphate-binding positions include R116 and 143–146 (HPCQ). Residues N174, D235, and 239-240 (SM) each bind L-ornithine. Carbamoyl phosphate-binding residues include C275 and R303.

Belongs to the aspartate/ornithine carbamoyltransferase superfamily. OTCase family.

It localises to the cytoplasm. It carries out the reaction carbamoyl phosphate + L-ornithine = L-citrulline + phosphate + H(+). The protein operates within amino-acid biosynthesis; L-arginine biosynthesis; L-arginine from L-ornithine and carbamoyl phosphate: step 1/3. Functionally, reversibly catalyzes the transfer of the carbamoyl group from carbamoyl phosphate (CP) to the N(epsilon) atom of ornithine (ORN) to produce L-citrulline. This is Ornithine carbamoyltransferase from Chlorobaculum tepidum (strain ATCC 49652 / DSM 12025 / NBRC 103806 / TLS) (Chlorobium tepidum).